We begin with the raw amino-acid sequence, 163 residues long: Protein EARLY RESPONSIVE TO DEHYDRATION 15 (163 aa).

The short motif at 10–20 is the PAM2-like element; that stretch reads TLNPDAPLFIP. Residues 118–163 are disordered; sequence NGEMVKKSSGNRSPRSIVEPAKYAEKPAKWGNQRVAAAPRNIHQPR.

Interacts with PAB2, PAB4 and PAB8. Interacts with MPC. Expressed in cauline leaves, stems, rosette leaves, immature siliques and primary inflorescences.

It is found in the cytoplasm. Functionally, central component of stress responses that interacts with poly(A)-binding proteins. Negative regulator of abscisic acid (ABA) responses, including resistance to drought and freezing as well as stomatal closure regulation. Mediates resistance to the bacterial necrotroph pathogen Erwinia carotovora subsp. carotovora and promotes the induction of marker genes for systemic acquired resistance (SAR). The polypeptide is Protein EARLY RESPONSIVE TO DEHYDRATION 15 (ERD15) (Arabidopsis thaliana (Mouse-ear cress)).